The primary structure comprises 161 residues: Cytochrome c-type biogenesis protein CcmE (161 aa).

Residues 1–8 (MNPRRKKR) are Cytoplasmic-facing. A helical; Signal-anchor for type II membrane protein transmembrane segment spans residues 9-29 (LGLILALFVGISATVGLMLYA). The Periplasmic segment spans residues 30–161 (LNQNMDLFYT…TEQQKQGTGQ (132 aa)). The heme site is built by His129 and Tyr133. The segment at 142 to 161 (MKKTHEPLQYTEQQKQGTGQ) is disordered. Over residues 151 to 161 (YTEQQKQGTGQ) the composition is skewed to polar residues.

This sequence belongs to the CcmE/CycJ family.

Its subcellular location is the cell inner membrane. Its function is as follows. Heme chaperone required for the biogenesis of c-type cytochromes. Transiently binds heme delivered by CcmC and transfers the heme to apo-cytochromes in a process facilitated by CcmF and CcmH. The chain is Cytochrome c-type biogenesis protein CcmE from Aliivibrio fischeri (strain ATCC 700601 / ES114) (Vibrio fischeri).